The chain runs to 473 residues: MTMPESMLSESKLSGWAISPKLAQLASLAGHYADPEFSVAHGGHVRTIAAGHYTVSGLSRHVRLGEFVAHRSATGIHLGEVVRVEPDICYVCPIEPGEPIGIHDTVIRKGAFRVSPDESWCGRTINALGEPIDGQGPLASGIVRRSISNNAPPSMTRKRVETPFKTGVRAIDIFSPLCLGQRLGIFAGSGVGKSTLLSMLAKADAFDKVVIALVGERGREVREFIEDTMGDNMSKSVAVVATSDESPMLRKMAPLSAVTIAEHFRDQGDNVLLIIDSVTRFAHAIREVAVASGEPPVARGYPASVFTELPRLLERAGPGAEGTGTITAIVSILVDGDNHNDPIADSTRGILDGHIVLDRSLAEEGRYPPINPLASISRLAKKAWTPDQEKLVSRLKALVHRFEETRDLRLIGGYRPGTDPDLDMAVKQVPIIYETLKQLPDEPAAQDAYADLATALRGGAQNGQPQVNPRMRG.

187–194 (AGSGVGKS) contacts ATP.

This sequence belongs to the ATPase alpha/beta chains family.

It localises to the cytoplasm. It carries out the reaction ATP + H2O + 4 H(+)(in) = ADP + phosphate + 5 H(+)(out). Functionally, probable catalytic subunit of a protein translocase for flagellum-specific export, or a proton translocase involved in local circuits at the flagellum. The chain is Flagellum-specific ATP synthase (fliI) from Agrobacterium fabrum (strain C58 / ATCC 33970) (Agrobacterium tumefaciens (strain C58)).